The following is a 1006-amino-acid chain: Probable beta-galactosidase A (1006 aa).

The N-terminal stretch at 1–18 (MKLLSVCAVALLAAQAAG) is a signal peptide. 4 residues coordinate substrate: Tyr-96, Asn-140, Ala-141, and Glu-142. The N-linked (GlcNAc...) asparagine glycan is linked to Asn-156. Residue Asn-199 coordinates substrate. Catalysis depends on Glu-200, which acts as the Proton donor. A disulfide bridge links Cys-205 with Cys-206. Asn-207 carries an N-linked (GlcNAc...) asparagine glycan. Position 260 (Tyr-260) interacts with substrate. Cys-266 and Cys-315 form a disulfide bridge. The Nucleophile role is filled by Glu-298. Substrate is bound at residue Tyr-364. Asn-373, Asn-402, Asn-422, Asn-622, Asn-777, and Asn-914 each carry an N-linked (GlcNAc...) asparagine glycan.

It belongs to the glycosyl hydrolase 35 family.

The protein resides in the secreted. The catalysed reaction is Hydrolysis of terminal non-reducing beta-D-galactose residues in beta-D-galactosides.. Functionally, cleaves beta-linked terminal galactosyl residues from gangliosides, glycoproteins, and glycosaminoglycans. This Neosartorya fischeri (strain ATCC 1020 / DSM 3700 / CBS 544.65 / FGSC A1164 / JCM 1740 / NRRL 181 / WB 181) (Aspergillus fischerianus) protein is Probable beta-galactosidase A (lacA).